Consider the following 285-residue polypeptide: Inhibitor of growth protein 5 (285 aa).

Residues 116-225 (EKASSTRAKS…ATHPSDVMDM (110 aa)) are disordered. The segment covering 131 to 149 (KKGRKKTKDSKTTGKKKKS) has biased composition (basic residues). Over residues 160 to 178 (NNQSNANSSVNSSSNAGQG) the composition is skewed to low complexity. Residues 232 to 281 (PTYCLCHQVSYGEMIGCDNPDCPIEWFHFACVGLTTKPKGKWFCPKCTQD) form a PHD-type zinc finger. Zn(2+) contacts are provided by C235, C237, C248, C253, H259, C262, C275, and C278.

This sequence belongs to the ING family. Component of the Enok complex composed of at least Br140, enok, Eaf6 and Ing5.

Its subcellular location is the nucleus. The protein localises to the chromosome. Component of the Enok complex which has a histone H3 acetyltransferase activity. This chain is Inhibitor of growth protein 5, found in Drosophila melanogaster (Fruit fly).